The primary structure comprises 390 residues: Queuine tRNA-ribosyltransferase (390 aa).

D92 serves as the catalytic Proton acceptor. Substrate is bound by residues 92 to 96, D146, Q195, and G222; that span reads DSGGF. Residues 253–259 are RNA binding; sequence GVGTPED. D272 acts as the Nucleophile in catalysis. Residues 277-281 form an RNA binding; important for wobble base 34 recognition region; sequence TRNAR. Residues C310, C312, C315, and H354 each coordinate Zn(2+).

This sequence belongs to the queuine tRNA-ribosyltransferase family. As to quaternary structure, homodimer. Within each dimer, one monomer is responsible for RNA recognition and catalysis, while the other monomer binds to the replacement base PreQ1. Requires Zn(2+) as cofactor.

The enzyme catalyses 7-aminomethyl-7-carbaguanine + guanosine(34) in tRNA = 7-aminomethyl-7-carbaguanosine(34) in tRNA + guanine. The protein operates within tRNA modification; tRNA-queuosine biosynthesis. In terms of biological role, catalyzes the base-exchange of a guanine (G) residue with the queuine precursor 7-aminomethyl-7-deazaguanine (PreQ1) at position 34 (anticodon wobble position) in tRNAs with GU(N) anticodons (tRNA-Asp, -Asn, -His and -Tyr). Catalysis occurs through a double-displacement mechanism. The nucleophile active site attacks the C1' of nucleotide 34 to detach the guanine base from the RNA, forming a covalent enzyme-RNA intermediate. The proton acceptor active site deprotonates the incoming PreQ1, allowing a nucleophilic attack on the C1' of the ribose to form the product. After dissociation, two additional enzymatic reactions on the tRNA convert PreQ1 to queuine (Q), resulting in the hypermodified nucleoside queuosine (7-(((4,5-cis-dihydroxy-2-cyclopenten-1-yl)amino)methyl)-7-deazaguanosine). The sequence is that of Queuine tRNA-ribosyltransferase from Paracidovorax citrulli (strain AAC00-1) (Acidovorax citrulli).